Reading from the N-terminus, the 148-residue chain is Large ribosomal subunit protein bL9 (148 aa).

It belongs to the bacterial ribosomal protein bL9 family.

Its function is as follows. Binds to the 23S rRNA. This is Large ribosomal subunit protein bL9 from Pelotomaculum thermopropionicum (strain DSM 13744 / JCM 10971 / SI).